The following is a 942-amino-acid chain: Chitin synthase 4 (942 aa).

The disordered stretch occupies residues 1–124 (MPPRYPFGGG…FDEHDGDVPL (124 aa)). Residues 14 to 26 (DEAHHQPLERRTT) are compositionally biased toward basic and acidic residues. The segment covering 27 to 36 (AEAQGNSFTH) has biased composition (polar residues). Asparagine 604 carries an N-linked (GlcNAc...) asparagine glycan. A run of 7 helical transmembrane segments spans residues 641-661 (TIQL…FFIL), 674-694 (VPNL…FLLS), 709-729 (AMVV…YLAV), 755-775 (IVIS…MFLE), 783-803 (IVQY…YAFA), 885-905 (VLCW…ISSI), and 909-929 (TIYM…RMMG).

The protein belongs to the chitin synthase family. Class I subfamily.

The protein localises to the cell membrane. The protein resides in the cytoplasmic vesicle membrane. The enzyme catalyses [(1-&gt;4)-N-acetyl-beta-D-glucosaminyl](n) + UDP-N-acetyl-alpha-D-glucosamine = [(1-&gt;4)-N-acetyl-beta-D-glucosaminyl](n+1) + UDP + H(+). Functionally, polymerizes chitin, a structural polymer of the cell wall and septum, by transferring the sugar moiety of UDP-GlcNAc to the non-reducing end of the growing chitin polymer. The sequence is that of Chitin synthase 4 from Mycosarcoma maydis (Corn smut fungus).